Here is a 644-residue protein sequence, read N- to C-terminus: Chaperone protein DnaK (644 aa).

A Phosphothreonine; by autocatalysis modification is found at T199. Residues 602 to 644 (LYAEQSAQQQGSAGATGGEQPKADKAADDGVVDAEFEEVKDDK) are disordered. Residues 604-614 (AEQSAQQQGSA) are compositionally biased toward low complexity. A compositionally biased stretch (acidic residues) spans 631–644 (GVVDAEFEEVKDDK).

The protein belongs to the heat shock protein 70 family.

Acts as a chaperone. The protein is Chaperone protein DnaK of Teredinibacter turnerae (strain ATCC 39867 / T7901).